A 214-amino-acid chain; its full sequence is Ras-related protein RABH1c (214 aa).

16-23 lines the GTP pocket; the sequence is GDQSVGKT. The short motif at 38-46 is the Effector region element; that stretch reads YQPTIGIDF. Residues 64–68, 123–126, and 153–154 each bind GTP; these read DTAGQ, NKTD, and SA. A disordered region spans residues 194–214; sequence TSNSSQGEQQGGAGGGGGCSC. Positions 202–214 are enriched in gly residues; that stretch reads QQGGAGGGGGCSC. 2 S-geranylgeranyl cysteine lipidation sites follow: cysteine 212 and cysteine 214. A Cysteine methyl ester modification is found at cysteine 214.

Belongs to the small GTPase superfamily. Rab family. In terms of assembly, interacts with the C-terminus of GC5, but not with GC3.

The protein localises to the golgi apparatus membrane. Its subcellular location is the cytoplasm. It is found in the cytosol. Its function is as follows. Protein transport. Regulator of membrane traffic from the Golgi apparatus towards the endoplasmic reticulum (ER). This Arabidopsis thaliana (Mouse-ear cress) protein is Ras-related protein RABH1c (RABH1C).